The primary structure comprises 430 residues: Serine hydroxymethyltransferase (430 aa).

Residue 120-122 coordinates (6S)-5,6,7,8-tetrahydrofolate; sequence GHI. Residue K226 is modified to N6-(pyridoxal phosphate)lysine.

It belongs to the SHMT family. In terms of assembly, homodimer. It depends on pyridoxal 5'-phosphate as a cofactor.

The protein resides in the cytoplasm. Its pathway is amino-acid biosynthesis; glycine biosynthesis; glycine from L-serine: step 1/1. Catalyzes the reversible interconversion of serine and glycine with a modified folate serving as the one-carbon carrier. Also exhibits a pteridine-independent aldolase activity toward beta-hydroxyamino acids, producing glycine and aldehydes, via a retro-aldol mechanism. The chain is Serine hydroxymethyltransferase from Pyrobaculum islandicum (strain DSM 4184 / JCM 9189 / GEO3).